Here is a 444-residue protein sequence, read N- to C-terminus: RAC family serine/threonine-protein kinase homolog (444 aa).

The 96-residue stretch at 5-100 (PIKHEGFLTK…WIEILINERE (96 aa)) folds into the PH domain. The Protein kinase domain maps to 120–374 (FELLNLVGKG…PNLIKRHPFF (255 aa)). Residues 126-134 (VGKGSFGKV) and Lys149 each bind ATP. Asp243 serves as the catalytic Proton acceptor. Residue Thr278 is modified to Phosphothreonine. An AGC-kinase C-terminal domain is found at 375-444 (RSIDWEQLFQ…TYVAESEHLR (70 aa)).

Belongs to the protein kinase superfamily. AGC Ser/Thr protein kinase family. RAC subfamily.

The catalysed reaction is L-seryl-[protein] + ATP = O-phospho-L-seryl-[protein] + ADP + H(+). It catalyses the reaction L-threonyl-[protein] + ATP = O-phospho-L-threonyl-[protein] + ADP + H(+). Predominantly involved during the aggregation to control cell polarity and chemotaxis. Phosphorylates talB, gefN, gefS, PI4P 5-kinase and gacQ. This chain is RAC family serine/threonine-protein kinase homolog (pkbA), found in Dictyostelium discoideum (Social amoeba).